Reading from the N-terminus, the 243-residue chain is Leucyl/phenylalanyl-tRNA--protein transferase (243 aa).

Residues 1–22 (MHSQPYLLSPTPNTPFPPAEHA) are disordered.

Belongs to the L/F-transferase family.

The protein resides in the cytoplasm. The catalysed reaction is N-terminal L-lysyl-[protein] + L-leucyl-tRNA(Leu) = N-terminal L-leucyl-L-lysyl-[protein] + tRNA(Leu) + H(+). It carries out the reaction N-terminal L-arginyl-[protein] + L-leucyl-tRNA(Leu) = N-terminal L-leucyl-L-arginyl-[protein] + tRNA(Leu) + H(+). The enzyme catalyses L-phenylalanyl-tRNA(Phe) + an N-terminal L-alpha-aminoacyl-[protein] = an N-terminal L-phenylalanyl-L-alpha-aminoacyl-[protein] + tRNA(Phe). In terms of biological role, functions in the N-end rule pathway of protein degradation where it conjugates Leu, Phe and, less efficiently, Met from aminoacyl-tRNAs to the N-termini of proteins containing an N-terminal arginine or lysine. The sequence is that of Leucyl/phenylalanyl-tRNA--protein transferase from Xylella fastidiosa (strain M23).